We begin with the raw amino-acid sequence, 366 residues long: Adenosine deaminase (366 aa).

Zn(2+)-binding residues include His-19 and His-21. Positions 21, 23, and 181 each coordinate substrate. His-208 provides a ligand contact to Zn(2+). Catalysis depends on Glu-211, which acts as the Proton donor. Residue Asp-304 coordinates Zn(2+).

The protein belongs to the metallo-dependent hydrolases superfamily. Adenosine and AMP deaminases family. Adenosine deaminase subfamily. It depends on Zn(2+) as a cofactor.

It catalyses the reaction adenosine + H2O + H(+) = inosine + NH4(+). The enzyme catalyses 2'-deoxyadenosine + H2O + H(+) = 2'-deoxyinosine + NH4(+). Functionally, catalyzes the hydrolytic deamination of adenosine and 2-deoxyadenosine. This chain is Adenosine deaminase, found in Mycobacterium avium (strain 104).